The chain runs to 541 residues: Protein yellow (541 aa).

The signal sequence occupies residues 1 to 21; it reads MFQDKGWVLVTLIALVTPSWA. Asparagine 144 carries an N-linked (GlcNAc...) asparagine glycan.

The protein belongs to the major royal jelly protein family.

Its subcellular location is the secreted. In terms of biological role, controls the pigmentation pattern of the adult cuticle and larval mouth parts. The sequence is that of Protein yellow (y) from Drosophila erecta (Fruit fly).